The chain runs to 454 residues: Cobyrinate a,c-diamide synthase (454 aa).

One can recognise a GATase cobBQ-type domain in the interval 247 to 442 (KIGIAMDSAF…IHAHWASNPN (196 aa)). C329 acts as the Nucleophile in catalysis.

This sequence belongs to the CobB/CbiA family. Mg(2+) is required as a cofactor.

The enzyme catalyses cob(II)yrinate + 2 L-glutamine + 2 ATP + 2 H2O = cob(II)yrinate a,c diamide + 2 L-glutamate + 2 ADP + 2 phosphate + 2 H(+). The protein operates within cofactor biosynthesis; adenosylcobalamin biosynthesis; cob(II)yrinate a,c-diamide from sirohydrochlorin (anaerobic route): step 10/10. In terms of biological role, catalyzes the ATP-dependent amidation of the two carboxylate groups at positions a and c of cobyrinate, using either L-glutamine or ammonia as the nitrogen source. The protein is Cobyrinate a,c-diamide synthase of Leptospira interrogans serogroup Icterohaemorrhagiae serovar Lai (strain 56601).